The following is a 476-amino-acid chain: Aspartyl/glutamyl-tRNA(Asn/Gln) amidotransferase subunit B (476 aa).

It belongs to the GatB/GatE family. GatB subfamily. Heterotrimer of A, B and C subunits.

It carries out the reaction L-glutamyl-tRNA(Gln) + L-glutamine + ATP + H2O = L-glutaminyl-tRNA(Gln) + L-glutamate + ADP + phosphate + H(+). It catalyses the reaction L-aspartyl-tRNA(Asn) + L-glutamine + ATP + H2O = L-asparaginyl-tRNA(Asn) + L-glutamate + ADP + phosphate + 2 H(+). Functionally, allows the formation of correctly charged Asn-tRNA(Asn) or Gln-tRNA(Gln) through the transamidation of misacylated Asp-tRNA(Asn) or Glu-tRNA(Gln) in organisms which lack either or both of asparaginyl-tRNA or glutaminyl-tRNA synthetases. The reaction takes place in the presence of glutamine and ATP through an activated phospho-Asp-tRNA(Asn) or phospho-Glu-tRNA(Gln). The sequence is that of Aspartyl/glutamyl-tRNA(Asn/Gln) amidotransferase subunit B from Clostridium botulinum (strain Langeland / NCTC 10281 / Type F).